We begin with the raw amino-acid sequence, 279 residues long: Putative E3 ubiquitin-protein ligase C36B7.05c (279 aa).

The FYVE-type zinc finger occupies 27 to 122 (DDESAQCNNC…VCVNCRQQLS (96 aa)). Cys33, Cys36, Cys49, Cys52, Cys57, Cys60, Cys114, and Cys117 together coordinate Zn(2+). Residue Ser200 is modified to Phosphoserine. The RING-type; atypical zinc-finger motif lies at 230–273 (CIICFEEFAAGDRVARIEYCLCIFHLKCYRDWLSTGAAGCPVHA).

The protein resides in the cytoplasm. It localises to the nucleus. Its subcellular location is the endosome membrane. The protein localises to the vacuole membrane. It carries out the reaction S-ubiquitinyl-[E2 ubiquitin-conjugating enzyme]-L-cysteine + [acceptor protein]-L-lysine = [E2 ubiquitin-conjugating enzyme]-L-cysteine + N(6)-ubiquitinyl-[acceptor protein]-L-lysine.. It participates in protein modification; protein ubiquitination. Functionally, functions as an E3 ubiquitin-protein ligase. Binds phospholipid vesicles containing phosphatidylinositol 3-phosphate. The protein is Putative E3 ubiquitin-protein ligase C36B7.05c of Schizosaccharomyces pombe (strain 972 / ATCC 24843) (Fission yeast).